The primary structure comprises 397 residues: Cytoplasmic tRNA 2-thiolation protein 2 (397 aa).

This sequence belongs to the CTU2/NCS2 family.

Its subcellular location is the cytoplasm. Its pathway is tRNA modification; 5-methoxycarbonylmethyl-2-thiouridine-tRNA biosynthesis. Plays a central role in 2-thiolation of mcm(5)S(2)U at tRNA wobble positions of tRNA(Lys), tRNA(Glu) and tRNA(Gln). May act by forming a heterodimer with NCS6/CTU1 that ligates sulfur from thiocarboxylated URM1 onto the uridine of tRNAs at wobble position. This Drosophila grimshawi (Hawaiian fruit fly) protein is Cytoplasmic tRNA 2-thiolation protein 2.